A 186-amino-acid polypeptide reads, in one-letter code: Peptidyl-tRNA hydrolase (186 aa).

Tyr14 provides a ligand contact to tRNA. His19 functions as the Proton acceptor in the catalytic mechanism. TRNA contacts are provided by Phe64, Asn66, and Asn112.

Belongs to the PTH family. As to quaternary structure, monomer.

It is found in the cytoplasm. The catalysed reaction is an N-acyl-L-alpha-aminoacyl-tRNA + H2O = an N-acyl-L-amino acid + a tRNA + H(+). Hydrolyzes ribosome-free peptidyl-tRNAs (with 1 or more amino acids incorporated), which drop off the ribosome during protein synthesis, or as a result of ribosome stalling. In terms of biological role, catalyzes the release of premature peptidyl moieties from peptidyl-tRNA molecules trapped in stalled 50S ribosomal subunits, and thus maintains levels of free tRNAs and 50S ribosomes. This Mycoplasma mycoides subsp. mycoides SC (strain CCUG 32753 / NCTC 10114 / PG1) protein is Peptidyl-tRNA hydrolase.